Reading from the N-terminus, the 480-residue chain is Krueppel-like factor 10 (480 aa).

A compositionally biased stretch (polar residues) spans 1 to 12 (MLNFGASLQQAS). 3 disordered regions span residues 1 to 32 (MLNF…PWDK), 64 to 83 (VTPV…TPDL), and 97 to 146 (PSDF…APPL). The segment covering 14-32 (GKMELISEKSKEGAHPWDK) has biased composition (basic and acidic residues). Residue Ser183 is modified to Phosphoserine. A disordered region spans residues 202–222 (AAVSPNRPKPEPSTAANGAEK). Ser249 is modified (phosphoserine). C2H2-type zinc fingers lie at residues 369–393 (HICS…VRTH), 399–423 (FSCS…RRTH), and 429–451 (FACP…ARRH).

It belongs to the Sp1 C2H2-type zinc-finger protein family. In terms of processing, ubiquitinated; mediated by SIAH1 and leading to its subsequent proteasomal degradation.

It localises to the nucleus. Functionally, transcriptional repressor which binds to the consensus sequence 5'-GGTGTG-3'. Regulates the circadian expression of genes involved in lipogenesis, gluconeogenesis, and glycolysis in the liver. Represses the expression of PCK2, a rate-limiting step enzyme of gluconeogenesis. May play a role in the cell cycle regulation. Plays a role in the regulation of the circadian clock; binds to the GC box sequence in the promoter of the core clock component ARTNL/BMAL1 and represses its transcriptional activity. This is Krueppel-like factor 10 (Klf10) from Rattus norvegicus (Rat).